The following is a 250-amino-acid chain: Ubiquinone/menaquinone biosynthesis C-methyltransferase UbiE (250 aa).

S-adenosyl-L-methionine contacts are provided by residues Thr-73, Asp-94, 122–123 (NS), and Ser-139.

It belongs to the class I-like SAM-binding methyltransferase superfamily. MenG/UbiE family.

The enzyme catalyses a 2-demethylmenaquinol + S-adenosyl-L-methionine = a menaquinol + S-adenosyl-L-homocysteine + H(+). It catalyses the reaction a 2-methoxy-6-(all-trans-polyprenyl)benzene-1,4-diol + S-adenosyl-L-methionine = a 5-methoxy-2-methyl-3-(all-trans-polyprenyl)benzene-1,4-diol + S-adenosyl-L-homocysteine + H(+). It functions in the pathway quinol/quinone metabolism; menaquinone biosynthesis; menaquinol from 1,4-dihydroxy-2-naphthoate: step 2/2. It participates in cofactor biosynthesis; ubiquinone biosynthesis. Its function is as follows. Methyltransferase required for the conversion of demethylmenaquinol (DMKH2) to menaquinol (MKH2) and the conversion of 2-polyprenyl-6-methoxy-1,4-benzoquinol (DDMQH2) to 2-polyprenyl-3-methyl-6-methoxy-1,4-benzoquinol (DMQH2). This is Ubiquinone/menaquinone biosynthesis C-methyltransferase UbiE from Wigglesworthia glossinidia brevipalpis.